The primary structure comprises 386 residues: Lycopene beta-cyclase (386 aa).

Position 3–33 (3–33 (DLILVGGGLANGLIAWRLRQRYPQLNLLLIE)) interacts with NAD(+).

This sequence belongs to the lycopene cyclase family. FAD is required as a cofactor.

The catalysed reaction is a carotenoid psi-end group = a carotenoid beta-end derivative. It carries out the reaction all-trans-lycopene = gamma-carotene. The enzyme catalyses gamma-carotene = all-trans-beta-carotene. Its pathway is carotenoid biosynthesis; beta-carotene biosynthesis. In terms of biological role, catalyzes the double cyclization reaction which converts lycopene to beta-carotene. In Pseudescherichia vulneris (Escherichia vulneris), this protein is Lycopene beta-cyclase.